A 925-amino-acid chain; its full sequence is MWNKHRLAFILVGLLFHLFYLRSIFDIYFVSPLVHGMRQFKSNEEPPAKRLFLIVGDGLRADTSFDKVKHPVTGKTEFLAPYLRSLVEHNATYGISHTRMPTESRPGHVAMIAGFYEDVSAVTKGWKENPVDFDSVFNQSTHTYSFGSPDILPMFKSGASDPTKVDAWMYGHEFEDFTQSSIELDAYVFRHMDALFRNATVDSKLRHEMMQDGNVFFLHLLGCDTAGHSYRPYSAEYYDNVKYIDSQLERLVPKVREFFGDDDTAFVFTADHGMSAFGSHGDGHPNNTRTPLVAWGAGLNRPVLNDVPVYDNYTENWDLAHVRRNDVNQADIASLMSYLIGLNYPTNSVGELPLAYVNGTERTKLNALYKNALSILEQYLVKETEMIQSQLVYKEYPKFAQKSHSSYIQEIEHLIDRIANGEEDLEPEAIALSEELMKTALEGLQYLTTYNWRFIRSIVTLGFIGWITYSFTIFLRLFILEKQYAMKTSPQNLASFGALTAALNYVLYYQRSPFNYYMYLLFPLFFWSQILTNSTILHDGIREMFKGVSMLQRIGICALIVSIYEGIVYGYFDRWIFTIIFNLLALYPFFCGIKDAKTNMFWGANSMALSIFTLFDAVKIESLTQINVSGLLLVASGLYALWRVSKKINSHTKIVILLQILLLAMMLAVTNKSVTSLQQRAGLPTDAKIAGWVILTLSLSLMPLLHYLKPSNDYQVRVLVIYLTFAPTFLILTISFESFFYLLFTNYLMLWIEIESKIKAQNIAKNSQNWLQLLRISIIGFFLLQFAFFGTGNVASISSFSLDSVYRLMPVFDPFPMGALLILKIMIPYILLSTALGIMNLKLNIKDYTVSSLILSTSDVLSLNFFYLLRTEGSWLDIGVTISNYCLAILSSLFMIVLELFSHFLLKNVRDNGMDIAASKQQKRH.

Over 1–6 (MWNKHR) the chain is Cytoplasmic. Residues 7–27 (LAFILVGLLFHLFYLRSIFDI) traverse the membrane as a helical segment. Residues 28–457 (YFVSPLVHGM…TTYNWRFIRS (430 aa)) lie on the Lumenal side of the membrane. Residues N90, N138, N198, N286, N312, and N358 are each glycosylated (N-linked (GlcNAc...) asparagine). Residues 458 to 478 (IVTLGFIGWITYSFTIFLRLF) form a helical membrane-spanning segment. Residues 479-492 (ILEKQYAMKTSPQN) are Cytoplasmic-facing. A helical transmembrane segment spans residues 493-510 (LASFGALTAALNYVLYYQ). At 511–516 (RSPFNY) the chain is on the lumenal side. Residues 517–537 (YMYLLFPLFFWSQILTNSTIL) form a helical membrane-spanning segment. Residues 538–547 (HDGIREMFKG) lie on the Cytoplasmic side of the membrane. Residues 548–568 (VSMLQRIGICALIVSIYEGIV) traverse the membrane as a helical segment. Residues 569–574 (YGYFDR) lie on the Lumenal side of the membrane. Residues 575–595 (WIFTIIFNLLALYPFFCGIKD) traverse the membrane as a helical segment. The Cytoplasmic portion of the chain corresponds to 596-599 (AKTN). The chain crosses the membrane as a helical span at residues 600–620 (MFWGANSMALSIFTLFDAVKI). Position 621 (E621) is a topological domain, lumenal. A helical membrane pass occupies residues 622-642 (SLTQINVSGLLLVASGLYALW). The Cytoplasmic segment spans residues 643 to 653 (RVSKKINSHTK). A helical transmembrane segment spans residues 654–674 (IVILLQILLLAMMLAVTNKSV). At 675–687 (TSLQQRAGLPTDA) the chain is on the lumenal side. The chain crosses the membrane as a helical span at residues 688 to 708 (KIAGWVILTLSLSLMPLLHYL). Over 709-719 (KPSNDYQVRVL) the chain is Cytoplasmic. Residues 720–740 (VIYLTFAPTFLILTISFESFF) traverse the membrane as a helical segment. Residues 741 to 775 (YLLFTNYLMLWIEIESKIKAQNIAKNSQNWLQLLR) are Lumenal-facing. The helical transmembrane segment at 776–796 (ISIIGFFLLQFAFFGTGNVAS) threads the bilayer. The Cytoplasmic segment spans residues 797 to 818 (ISSFSLDSVYRLMPVFDPFPMG). The chain crosses the membrane as a helical span at residues 819 to 839 (ALLILKIMIPYILLSTALGIM). At 840 to 848 (NLKLNIKDY) the chain is on the lumenal side. A helical membrane pass occupies residues 849-869 (TVSSLILSTSDVLSLNFFYLL). Topologically, residues 870-885 (RTEGSWLDIGVTISNY) are cytoplasmic. The helical transmembrane segment at 886–906 (CLAILSSLFMIVLELFSHFLL) threads the bilayer. Residues 907–925 (KNVRDNGMDIAASKQQKRH) are Lumenal-facing.

This sequence belongs to the PIGG/PIGN/PIGO family. PIGN subfamily.

It localises to the endoplasmic reticulum membrane. It functions in the pathway glycolipid biosynthesis; glycosylphosphatidylinositol-anchor biosynthesis. In terms of biological role, ethanolamine phosphate transferase involved in glycosylphosphatidylinositol-anchor biosynthesis. Transfers ethanolamine phosphate to the first alpha-1,4-linked mannose of the glycosylphosphatidylinositol precursor of GPI-anchor. The polypeptide is GPI ethanolamine phosphate transferase 1 (MCD4) (Eremothecium gossypii (strain ATCC 10895 / CBS 109.51 / FGSC 9923 / NRRL Y-1056) (Yeast)).